A 356-amino-acid polypeptide reads, in one-letter code: Peptide chain release factor 1 (356 aa).

Position 235 is an N5-methylglutamine (Gln-235).

The protein belongs to the prokaryotic/mitochondrial release factor family. Methylated by PrmC. Methylation increases the termination efficiency of RF1.

It is found in the cytoplasm. Its function is as follows. Peptide chain release factor 1 directs the termination of translation in response to the peptide chain termination codons UAG and UAA. This chain is Peptide chain release factor 1, found in Mycobacteroides abscessus (strain ATCC 19977 / DSM 44196 / CCUG 20993 / CIP 104536 / JCM 13569 / NCTC 13031 / TMC 1543 / L948) (Mycobacterium abscessus).